Consider the following 274-residue polypeptide: Glutamate racemase (274 aa).

Substrate is bound by residues 9–10 and 41–42; these read DS and YG. Residue C72 is the Proton donor/acceptor of the active site. A substrate-binding site is contributed by 73–74; sequence NT. C184 acts as the Proton donor/acceptor in catalysis. 185-186 provides a ligand contact to substrate; the sequence is TH.

The protein belongs to the aspartate/glutamate racemases family.

The catalysed reaction is L-glutamate = D-glutamate. Its pathway is cell wall biogenesis; peptidoglycan biosynthesis. Functionally, provides the (R)-glutamate required for cell wall biosynthesis. This Oceanobacillus iheyensis (strain DSM 14371 / CIP 107618 / JCM 11309 / KCTC 3954 / HTE831) protein is Glutamate racemase.